A 347-amino-acid polypeptide reads, in one-letter code: MTFMQQLQEAGERFRCINGLLWVVFGLGVLKCTTLSLRFLALIFDLFLLPAVNFDKYGAKSGKYCVITGASDGIGKEFARQMAKRGFNLVLISRTQSKLEALQKELEDQHHVVVKILAIDIAEDKESNYESIKELCAQLPITVLVNNVGQSHSIPVPFLETEEKELRDIITINNTATLLITQIIAPKIVETVKAENKKSGTRGLILTMGSFGGLIPTPLLATYSGSKSFLQSWSNSLAGELSKDAIDVELIISYLVTSSMSKIRRSSLMIPNPQQFVKSTLRSVGRRCGSQERYATMTPYWAHAVYQFVITETFGVYSKIVNSINYSFHKSIRIRALKKAARQVKKE.

Residues 20–40 (LLWVVFGLGVLKCTTLSLRFL) form a helical membrane-spanning segment. Positions 66, 120, 147, 223, 227, 256, and 258 each coordinate NADP(+). The Proton donor role is filled by Tyr223. Lys227 serves as the catalytic Lowers pKa of active site Tyr.

It belongs to the short-chain dehydrogenases/reductases (SDR) family. In terms of assembly, interacts with the fatty acid elongation system components ELO3 and TSC13.

It localises to the endoplasmic reticulum membrane. It carries out the reaction a very-long-chain (3R)-3-hydroxyacyl-CoA + NADP(+) = a very-long-chain 3-oxoacyl-CoA + NADPH + H(+). The protein operates within lipid metabolism; fatty acid biosynthesis. Functionally, component of the microsomal membrane bound fatty acid elongation system, which produces the 26-carbon very long-chain fatty acids (VLCFA) from palmitate. Catalyzes the reduction of the 3-ketoacyl-CoA intermediate that is formed in each cycle of fatty acid elongation. VLCFAs serve as precursors for ceramide and sphingolipids. The protein is Very-long-chain 3-oxoacyl-CoA reductase of Saccharomyces cerevisiae (strain RM11-1a) (Baker's yeast).